Consider the following 145-residue polypeptide: Transcription factor MEE8 (145 aa).

The span at 33-49 shows a compositional bias: basic and acidic residues; it reads EKGVEKVGQKRSAESRR. A disordered region spans residues 33 to 61; that stretch reads EKGVEKVGQKRSAESRREGKKKRVKTQCV. A bHLH domain is found at 66-115; that stretch reads DKSDHDTLLKKKRRERIRRQLETLKEITPNCPQSDINAILDCVIEYTNNL.

As to quaternary structure, homodimer.

The protein localises to the nucleus. In terms of biological role, required during early embryo development, for the endosperm formation. In Arabidopsis thaliana (Mouse-ear cress), this protein is Transcription factor MEE8 (MEE8).